The sequence spans 325 residues: Probable pectate lyase B (325 aa).

The first 15 residues, 1–15 (MRLPTLFMLAAIATA), serve as a signal peptide directing secretion. Residues aspartate 132, aspartate 161, and aspartate 165 each contribute to the Ca(2+) site. The active site involves arginine 218.

Belongs to the polysaccharide lyase 1 family. It depends on Ca(2+) as a cofactor.

It localises to the secreted. It catalyses the reaction Eliminative cleavage of (1-&gt;4)-alpha-D-galacturonan to give oligosaccharides with 4-deoxy-alpha-D-galact-4-enuronosyl groups at their non-reducing ends.. Functionally, pectinolytic enzyme consist of four classes of enzymes: pectin lyase, polygalacturonase, pectin methylesterase and rhamnogalacturonase. Among pectinolytic enzymes, pectin lyase is the most important in depolymerization of pectin, since it cleaves internal glycosidic bonds of highly methylated pectins. Favors pectate, the anion, over pectin, the methyl ester. The polypeptide is Probable pectate lyase B (plyB) (Aspergillus terreus (strain NIH 2624 / FGSC A1156)).